We begin with the raw amino-acid sequence, 146 residues long: 3-hydroxyacyl-[acyl-carrier-protein] dehydratase FabZ (146 aa).

His48 is a catalytic residue.

The protein belongs to the thioester dehydratase family. FabZ subfamily.

The protein resides in the cytoplasm. The enzyme catalyses a (3R)-hydroxyacyl-[ACP] = a (2E)-enoyl-[ACP] + H2O. Its function is as follows. Involved in unsaturated fatty acids biosynthesis. Catalyzes the dehydration of short chain beta-hydroxyacyl-ACPs and long chain saturated and unsaturated beta-hydroxyacyl-ACPs. In Teredinibacter turnerae (strain ATCC 39867 / T7901), this protein is 3-hydroxyacyl-[acyl-carrier-protein] dehydratase FabZ.